A 488-amino-acid polypeptide reads, in one-letter code: Malonate-semialdehyde dehydrogenase 2 (488 aa).

Phe155, Lys179, Glu182, Arg183, and Ser232 together coordinate NAD(+). The active-site Nucleophile is Cys287. An NAD(+)-binding site is contributed by Glu387.

The protein belongs to the aldehyde dehydrogenase family. IolA subfamily. As to quaternary structure, homotetramer.

It catalyses the reaction 3-oxopropanoate + NAD(+) + CoA + H2O = hydrogencarbonate + acetyl-CoA + NADH + H(+). It carries out the reaction 2-methyl-3-oxopropanoate + NAD(+) + CoA + H2O = propanoyl-CoA + hydrogencarbonate + NADH + H(+). The protein operates within polyol metabolism; myo-inositol degradation into acetyl-CoA; acetyl-CoA from myo-inositol: step 7/7. Functionally, catalyzes the oxidation of malonate semialdehyde (MSA) and methylmalonate semialdehyde (MMSA) into acetyl-CoA and propanoyl-CoA, respectively. Is involved in a myo-inositol catabolic pathway. Bicarbonate, and not CO2, is the end-product of the enzymatic reaction. The polypeptide is Malonate-semialdehyde dehydrogenase 2 (Bacillus cereus (strain ZK / E33L)).